Here is a 519-residue protein sequence, read N- to C-terminus: General transcription factor 3C polypeptide 5 (519 aa).

Position 2 is an N-acetylalanine (alanine 2). A disordered region spans residues 465–519; the sequence is ALFSSSAKADGGKEQLTYESGEDEEDEEEEEEEEEDFKPSDGSENEMETEILDYV. Composition is skewed to acidic residues over residues 484 to 500 and 507 to 519; these read SGED…EEED and SENE…LDYV.

This sequence belongs to the TFIIIC subunit 5 family. As to quaternary structure, part of the TFIIIC subcomplex TFIIIC2, consisting of six subunits, GTF3C1, GTF3C2, GTF3C3, GTF3C4, GTF3C5 and GTF3C6. Interacts with BRF1, GTF3C6 and TBP.

It localises to the nucleus. Involved in RNA polymerase III-mediated transcription. Integral, tightly associated component of the DNA-binding TFIIIC2 subcomplex that directly binds tRNA and virus-associated RNA promoters. The protein is General transcription factor 3C polypeptide 5 (GTF3C5) of Homo sapiens (Human).